The sequence spans 598 residues: Arginine--tRNA ligase (598 aa).

A 'HIGH' region motif is present at residues 139–149 (ANPTGPMHVGH).

The protein belongs to the class-I aminoacyl-tRNA synthetase family. Monomer.

It localises to the cytoplasm. It catalyses the reaction tRNA(Arg) + L-arginine + ATP = L-arginyl-tRNA(Arg) + AMP + diphosphate. The protein is Arginine--tRNA ligase of Bradyrhizobium sp. (strain ORS 278).